The sequence spans 205 residues: MTGRFITVEGTEGVGKSTNLAFIEGFLRSRAIDVITTREPGGTPLAEELRELLLAKREEPVDACAELLMVFAARAQHLNQLVAPALARGQWVLCDRFTDATYAYQGAGRGLSLETISKLEFLVQGSLQPDITVWLDIDVRLGLERARARADLDRFEEEDVSFFERVRAGYRARAEEAPARFCRINAGQPLAQVQTDIQRALEAFL.

10–17 serves as a coordination point for ATP; the sequence is GTEGVGKS.

It belongs to the thymidylate kinase family.

The enzyme catalyses dTMP + ATP = dTDP + ADP. In terms of biological role, phosphorylation of dTMP to form dTDP in both de novo and salvage pathways of dTTP synthesis. This Teredinibacter turnerae (strain ATCC 39867 / T7901) protein is Thymidylate kinase.